Reading from the N-terminus, the 139-residue chain is Large ribosomal subunit protein uL14A (139 aa).

This sequence belongs to the universal ribosomal protein uL14 family. In terms of assembly, component of the large ribosomal subunit (LSU). Mature yeast ribosomes consist of a small (40S) and a large (60S) subunit. The 40S small subunit contains 1 molecule of ribosomal RNA (18S rRNA) and at least 33 different proteins. The large 60S subunit contains 3 rRNA molecules (25S, 5.8S and 5S rRNA) and at least 46 different proteins.

The protein localises to the cytoplasm. It is found in the nucleus. Its function is as follows. Component of the ribosome, a large ribonucleoprotein complex responsible for the synthesis of proteins in the cell. The small ribosomal subunit (SSU) binds messenger RNAs (mRNAs) and translates the encoded message by selecting cognate aminoacyl-transfer RNA (tRNA) molecules. The large subunit (LSU) contains the ribosomal catalytic site termed the peptidyl transferase center (PTC), which catalyzes the formation of peptide bonds, thereby polymerizing the amino acids delivered by tRNAs into a polypeptide chain. The nascent polypeptides leave the ribosome through a tunnel in the LSU and interact with protein factors that function in enzymatic processing, targeting, and the membrane insertion of nascent chains at the exit of the ribosomal tunnel. The sequence is that of Large ribosomal subunit protein uL14A (rpl2301) from Schizosaccharomyces pombe (strain 972 / ATCC 24843) (Fission yeast).